Consider the following 146-residue polypeptide: Ribonuclease H (146 aa).

Residues 1-138 (MYAWTDGACR…ADALANRGID (138 aa)) form the RNase H type-1 domain. Residues Asp6, Glu44, Asp66, and Asp130 each contribute to the Mg(2+) site.

The protein belongs to the RNase H family. In terms of assembly, monomer. Mg(2+) is required as a cofactor.

It is found in the cytoplasm. It catalyses the reaction Endonucleolytic cleavage to 5'-phosphomonoester.. Its function is as follows. Endonuclease that specifically degrades the RNA of RNA-DNA hybrids. This Alkalilimnicola ehrlichii (strain ATCC BAA-1101 / DSM 17681 / MLHE-1) protein is Ribonuclease H.